A 501-amino-acid polypeptide reads, in one-letter code: Glycerol kinase (501 aa).

Threonine 14 serves as a coordination point for ADP. 3 residues coordinate ATP: threonine 14, threonine 15, and serine 16. Threonine 14 serves as a coordination point for sn-glycerol 3-phosphate. An ADP-binding site is contributed by arginine 18. Residues arginine 84, glutamate 85, tyrosine 135, and aspartate 244 each coordinate sn-glycerol 3-phosphate. Arginine 84, glutamate 85, tyrosine 135, aspartate 244, and glutamine 245 together coordinate glycerol. 2 residues coordinate ADP: threonine 266 and glycine 309. ATP-binding residues include threonine 266, glycine 309, glutamine 313, and glycine 410. Glycine 410 and asparagine 414 together coordinate ADP.

It belongs to the FGGY kinase family.

It carries out the reaction glycerol + ATP = sn-glycerol 3-phosphate + ADP + H(+). Its pathway is polyol metabolism; glycerol degradation via glycerol kinase pathway; sn-glycerol 3-phosphate from glycerol: step 1/1. Its activity is regulated as follows. Inhibited by fructose 1,6-bisphosphate (FBP). Its function is as follows. Key enzyme in the regulation of glycerol uptake and metabolism. Catalyzes the phosphorylation of glycerol to yield sn-glycerol 3-phosphate. This Deinococcus radiodurans (strain ATCC 13939 / DSM 20539 / JCM 16871 / CCUG 27074 / LMG 4051 / NBRC 15346 / NCIMB 9279 / VKM B-1422 / R1) protein is Glycerol kinase.